A 721-amino-acid chain; its full sequence is Catalase-peroxidase 1 (721 aa).

The segment at residues 98–223 is a cross-link (tryptophyl-tyrosyl-methioninium (Trp-Tyr) (with M-249)); sequence WHAAGSYRVA…LAAVQMGLIY (126 aa). His99 (proton acceptor) is an active-site residue. A cross-link (tryptophyl-tyrosyl-methioninium (Tyr-Met) (with W-98)) is located at residues 223–249; it reads YVNPEGVNGQPDPLRTAQDVRVTFGRM. His264 is a heme b binding site.

Belongs to the peroxidase family. Peroxidase/catalase subfamily. Homodimer or homotetramer. The cofactor is heme b. In terms of processing, formation of the three residue Trp-Tyr-Met cross-link is important for the catalase, but not the peroxidase activity of the enzyme.

The enzyme catalyses H2O2 + AH2 = A + 2 H2O. The catalysed reaction is 2 H2O2 = O2 + 2 H2O. In terms of biological role, bifunctional enzyme with both catalase and broad-spectrum peroxidase activity. The polypeptide is Catalase-peroxidase 1 (Legionella pneumophila subsp. pneumophila (strain Philadelphia 1 / ATCC 33152 / DSM 7513)).